The sequence spans 159 residues: Immunoglobulin J chain (159 aa).

Positions 1–22 (MKNHLLFWGVLAVFIKAVHVKA) are cleaved as a signal peptide. The residue at position 23 (Q23) is a Pyrrolidone carboxylic acid. 3 cysteine pairs are disulfide-bonded: C35-C123, C94-C114, and C131-C156. N71 carries N-linked (GlcNAc...) (complex) asparagine glycosylation.

Part of the secretory IgA (sIgA) complex that consists of two, four or five IgA monomers, and two additional non-Ig polypeptides, namely the JCHAIN and the secretory component (the proteolytic product of PIGR). Part of the secretory IgM (sIgM) complex that consists of five IgM monomers, and two additional non-Ig polypeptides, namely the JCHAIN and the secretory component (the proteolytic product of PIGR). JCHAIN-containing IgM interacts (via CH4 domain) with FCRM (via Ig-like domain).

It localises to the secreted. Functionally, serves to link two monomer units of either IgM or IgA. In the case of IgM, the J chain-joined dimer is a nucleating unit for the IgM pentamer, and in the case of IgA it induces dimers and/or larger polymers. It also helps to bind these immunoglobulins to secretory component. The sequence is that of Immunoglobulin J chain from Homo sapiens (Human).